A 177-amino-acid polypeptide reads, in one-letter code: Cyclic pyranopterin monophosphate synthase (177 aa).

Substrate is bound by residues 89-91 (LCH) and 125-126 (ME). D140 is an active-site residue.

This sequence belongs to the MoaC family. As to quaternary structure, homohexamer; trimer of dimers.

It carries out the reaction (8S)-3',8-cyclo-7,8-dihydroguanosine 5'-triphosphate = cyclic pyranopterin phosphate + diphosphate. Its pathway is cofactor biosynthesis; molybdopterin biosynthesis. In terms of biological role, catalyzes the conversion of (8S)-3',8-cyclo-7,8-dihydroguanosine 5'-triphosphate to cyclic pyranopterin monophosphate (cPMP). The polypeptide is Cyclic pyranopterin monophosphate synthase (Streptomyces griseus subsp. griseus (strain JCM 4626 / CBS 651.72 / NBRC 13350 / KCC S-0626 / ISP 5235)).